Consider the following 393-residue polypeptide: Acetate kinase (393 aa).

A Mg(2+)-binding site is contributed by Asn-6. Lys-13 is an ATP binding site. Arg-87 is a substrate binding site. Residue Asp-143 is the Proton donor/acceptor of the active site. Residues His-203–Gly-207, Asp-278–Arg-280, and Gly-326–Asn-330 each bind ATP. Glu-380 lines the Mg(2+) pocket.

It belongs to the acetokinase family. Homodimer. The cofactor is Mg(2+). It depends on Mn(2+) as a cofactor.

It localises to the cytoplasm. It catalyses the reaction acetate + ATP = acetyl phosphate + ADP. It functions in the pathway metabolic intermediate biosynthesis; acetyl-CoA biosynthesis; acetyl-CoA from acetate: step 1/2. In terms of biological role, catalyzes the formation of acetyl phosphate from acetate and ATP. Can also catalyze the reverse reaction. This is Acetate kinase from Mycoplasma capricolum subsp. capricolum (strain California kid / ATCC 27343 / NCTC 10154).